A 723-amino-acid chain; its full sequence is Homeobox protein vnd (723 aa).

Disordered regions lie at residues M1–P115, A224–P307, G465–R549, and H703–P723. A compositionally biased stretch (basic and acidic residues) spans T10 to N22. Positions S23 to P36 are enriched in low complexity. Positions Q37–A48 are enriched in polar residues. Residues L61–F92 show a composition bias toward basic and acidic residues. Over residues S97 to S111 the composition is skewed to low complexity. Over residues H226–A235 the composition is skewed to basic and acidic residues. Over residues E237 to S255 the composition is skewed to polar residues. Positions E278 to A289 are enriched in basic and acidic residues. Over residues H298–P307 the composition is skewed to basic residues. Low complexity predominate over residues N483–N493. Residues L512–D528 show a composition bias toward acidic residues. The homeobox DNA-binding region spans K545 to Q604. A compositionally biased stretch (basic residues) spans H703–A716.

Belongs to the NK-2 homeobox family. Expressed in the CNS and midgut.

It is found in the nucleus. In terms of biological role, probable transcriptional regulator involved in the regulation of the proneural AS-C genes and the neurogenic genes of the enhancer of split complex. Could specifically activate proneural genes in the ventral-most neuroectoderm. This is Homeobox protein vnd (vnd) from Drosophila melanogaster (Fruit fly).